We begin with the raw amino-acid sequence, 281 residues long: Nucleoid occlusion protein (281 aa).

Residues glutamate 145–leucine 164 constitute a DNA-binding region (H-T-H motif).

Belongs to the ParB family.

The protein localises to the cytoplasm. It localises to the nucleoid. In terms of biological role, effects nucleoid occlusion by binding relatively nonspecifically to DNA and preventing the assembly of the division machinery in the vicinity of the nucleoid, especially under conditions that disturb the cell cycle. It helps to coordinate cell division and chromosome segregation by preventing the formation of the Z ring through the nucleoid, which would cause chromosome breakage. In Geobacillus sp. (strain WCH70), this protein is Nucleoid occlusion protein.